Consider the following 216-residue polypeptide: Adenylate kinase (216 aa).

ATP is bound at residue 11 to 16 (GSGKGT). Residues 31-60 (ATGDLFRKAIECGDELGDTVKSYMERGELV) form an NMP region. Residues T32, R37, 58 to 60 (ELV), 86 to 89 (GFPR), and Q93 contribute to the AMP site. The segment at 127–163 (GRWVCRSCQSPYQSGCAEVTKGKCSRCQGELYQRPDD) is LID. R128 contributes to the ATP binding site. Zn(2+) contacts are provided by C131, C134, C150, and C153. R160 and R171 together coordinate AMP. Residue A199 coordinates ATP.

The protein belongs to the adenylate kinase family. As to quaternary structure, monomer.

The protein resides in the cytoplasm. It catalyses the reaction AMP + ATP = 2 ADP. The protein operates within purine metabolism; AMP biosynthesis via salvage pathway; AMP from ADP: step 1/1. Functionally, catalyzes the reversible transfer of the terminal phosphate group between ATP and AMP. Plays an important role in cellular energy homeostasis and in adenine nucleotide metabolism. The sequence is that of Adenylate kinase from Dehalococcoides mccartyi (strain ATCC BAA-2100 / JCM 16839 / KCTC 5957 / BAV1).